A 272-amino-acid chain; its full sequence is Pantothenate synthetase (272 aa).

Residue 27–34 participates in ATP binding; the sequence is MGALHNGH. H34 functions as the Proton donor in the catalytic mechanism. Q58 contributes to the (R)-pantoate binding site. Q58 is a beta-alanine binding site. 143-146 is an ATP binding site; sequence GKKD. Q149 serves as a coordination point for (R)-pantoate. ATP-binding positions include V172 and 180–183; that span reads LSSR.

This sequence belongs to the pantothenate synthetase family. Homodimer.

It is found in the cytoplasm. The enzyme catalyses (R)-pantoate + beta-alanine + ATP = (R)-pantothenate + AMP + diphosphate + H(+). It functions in the pathway cofactor biosynthesis; (R)-pantothenate biosynthesis; (R)-pantothenate from (R)-pantoate and beta-alanine: step 1/1. Functionally, catalyzes the condensation of pantoate with beta-alanine in an ATP-dependent reaction via a pantoyl-adenylate intermediate. The polypeptide is Pantothenate synthetase (Aliarcobacter butzleri (strain RM4018) (Arcobacter butzleri)).